Reading from the N-terminus, the 782-residue chain is LPS-assembly protein LptD (782 aa).

An N-terminal signal peptide occupies residues 1-23 (MNKKHTLISLAILTALYSQQSLA).

The protein belongs to the LptD family. As to quaternary structure, component of the lipopolysaccharide transport and assembly complex. Interacts with LptE and LptA.

It localises to the cell outer membrane. In terms of biological role, together with LptE, is involved in the assembly of lipopolysaccharide (LPS) at the surface of the outer membrane. This is LPS-assembly protein LptD from Haemophilus influenzae (strain 86-028NP).